The following is a 214-amino-acid chain: MASLFKKKTVDDIIKDQNKELKGQQRAITRDRTALEKQEKQLEMEIKKMAKAGNKDACKVLAKQLVQLRKQKTRTYAVSSKVTSMSTQTKVMSSQMKMAGAMSTTAKTMQAVNKKMDPQKTLQTMQNFQKENMKMEMTEEMINDTLDDIFDASEDEEESQDIVNQVLDEIGIEISGKMAKAPSAAKGLPSASASKSTGISDEEIERQLKALGVD.

Positions 25–55 (QRAITRDRTALEKQEKQLEMEIKKMAKAGNK) form a coiled coil. The interval 178–214 (MAKAPSAAKGLPSASASKSTGISDEEIERQLKALGVD) is disordered. Residues 202–212 (EEIERQLKALG) carry the MIT-interacting motif motif.

It belongs to the SNF7 family. In terms of assembly, probable core component of the endosomal sorting required for transport complex III (ESCRT-III). ESCRT-III components are thought to multimerize to form a flat lattice on the perimeter membrane of the endosome.

The protein localises to the cytoplasm. It localises to the cytosol. The protein resides in the late endosome membrane. In terms of biological role, probable core component of the endosomal sorting required for transport complex III (ESCRT-III) which is involved in multivesicular bodies (MVBs) formation and sorting of endosomal cargo proteins into MVBs. MVBs contain intraluminal vesicles (ILVs) that are generated by invagination and scission from the limiting membrane of the endosome and mostly are delivered to lysosomes enabling degradation of membrane proteins, such as stimulated growth factor receptors, lysosomal enzymes and lipids. This chain is Charged multivesicular body protein 2b-A (chmp2b-a), found in Xenopus laevis (African clawed frog).